A 225-amino-acid chain; its full sequence is Ribonuclease HII (225 aa).

In terms of domain architecture, RNase H type-2 spans 35 to 225 (GLVAGVDEVG…SFRPCQISPD (191 aa)). A divalent metal cation contacts are provided by aspartate 41, glutamate 42, and aspartate 137.

It belongs to the RNase HII family. The cofactor is Mn(2+). Mg(2+) is required as a cofactor.

Its subcellular location is the cytoplasm. The enzyme catalyses Endonucleolytic cleavage to 5'-phosphomonoester.. Functionally, endonuclease that specifically degrades the RNA of RNA-DNA hybrids. The protein is Ribonuclease HII of Nostoc sp. (strain PCC 7120 / SAG 25.82 / UTEX 2576).